Consider the following 122-residue polypeptide: Small ribosomal subunit protein uS13 (122 aa).

The interval 97–122 is disordered; it reads PVRGQRTKTNARTRKGPARTVAGKKK.

Belongs to the universal ribosomal protein uS13 family. As to quaternary structure, part of the 30S ribosomal subunit. Forms a loose heterodimer with protein S19. Forms two bridges to the 50S subunit in the 70S ribosome.

Functionally, located at the top of the head of the 30S subunit, it contacts several helices of the 16S rRNA. In the 70S ribosome it contacts the 23S rRNA (bridge B1a) and protein L5 of the 50S subunit (bridge B1b), connecting the 2 subunits; these bridges are implicated in subunit movement. Contacts the tRNAs in the A and P-sites. The protein is Small ribosomal subunit protein uS13 of Pelobacter propionicus (strain DSM 2379 / NBRC 103807 / OttBd1).